Here is a 200-residue protein sequence, read N- to C-terminus: Dephospho-CoA kinase (200 aa).

One can recognise a DPCK domain in the interval 4–200 (VIGLTGGIGS…QKYIKMSHLY (197 aa)). An ATP-binding site is contributed by 12–17 (GSGKTT).

The protein belongs to the CoaE family.

The protein localises to the cytoplasm. The catalysed reaction is 3'-dephospho-CoA + ATP = ADP + CoA + H(+). Its pathway is cofactor biosynthesis; coenzyme A biosynthesis; CoA from (R)-pantothenate: step 5/5. Functionally, catalyzes the phosphorylation of the 3'-hydroxyl group of dephosphocoenzyme A to form coenzyme A. In Photobacterium profundum (strain SS9), this protein is Dephospho-CoA kinase.